Reading from the N-terminus, the 155-residue chain is Interleukin-2 (155 aa).

The signal sequence occupies residues 1-20; the sequence is MYSRQLASCVALALVLLANS. The O-linked (GalNAc...) threonine glycan is linked to Thr-23. Cys-78 and Cys-126 are joined by a disulfide.

Belongs to the IL-2 family.

It localises to the secreted. In terms of biological role, cytokine produced by activated CD4-positive helper T-cells and to a lesser extend activated CD8-positive T-cells and natural killer (NK) cells that plays pivotal roles in the immune response and tolerance. Binds to a receptor complex composed of either the high-affinity trimeric IL-2R (IL2RA/CD25, IL2RB/CD122 and IL2RG/CD132) or the low-affinity dimeric IL-2R (IL2RB and IL2RG). Interaction with the receptor leads to oligomerization and conformation changes in the IL-2R subunits resulting in downstream signaling starting with phosphorylation of JAK1 and JAK3. In turn, JAK1 and JAK3 phosphorylate the receptor to form a docking site leading to the phosphorylation of several substrates including STAT5. This process leads to activation of several pathways including STAT, phosphoinositide-3-kinase/PI3K and mitogen-activated protein kinase/MAPK pathways. Functions as a T-cell growth factor and can increase NK-cell cytolytic activity as well. Promotes strong proliferation of activated B-cells and subsequently immunoglobulin production. Plays a pivotal role in regulating the adaptive immune system by controlling the survival and proliferation of regulatory T-cells, which are required for the maintenance of immune tolerance. Moreover, participates in the differentiation and homeostasis of effector T-cell subsets, including Th1, Th2, Th17 as well as memory CD8-positive T-cells. In Meriones unguiculatus (Mongolian jird), this protein is Interleukin-2 (IL2).